Here is a 516-residue protein sequence, read N- to C-terminus: Signal recognition particle protein (516 aa).

GTP is bound by residues 108–115, 191–195, and 249–252; these read GLQGAGKT, DTAGR, and TKID. The segment at 383–405 is disordered; it reads MTPEERENPDLLTPSRRRRIASG.

The protein belongs to the GTP-binding SRP family. SRP54 subfamily. Part of the signal recognition particle protein translocation system, which is composed of SRP and FtsY.

It localises to the cytoplasm. The enzyme catalyses GTP + H2O = GDP + phosphate + H(+). In terms of biological role, involved in targeting and insertion of nascent membrane proteins into the cytoplasmic membrane. Binds to the hydrophobic signal sequence of the ribosome-nascent chain (RNC) as it emerges from the ribosomes. The SRP-RNC complex is then targeted to the cytoplasmic membrane where it interacts with the SRP receptor FtsY. The sequence is that of Signal recognition particle protein from Streptococcus mutans serotype c (strain ATCC 700610 / UA159).